A 325-amino-acid polypeptide reads, in one-letter code: Thiamine-monophosphate kinase (325 aa).

Positions 27 and 44 each coordinate Mg(2+). His-51 contacts substrate. A Mg(2+)-binding site is contributed by Asp-73. ATP is bound by residues Tyr-103, 120 to 121 (GD), and Arg-147. Mg(2+) is bound at residue Asp-121. Asp-215 lines the Mg(2+) pocket. Ser-217 serves as a coordination point for ATP. Asp-218 provides a ligand contact to Mg(2+). Substrate contacts are provided by Glu-264 and Tyr-321.

This sequence belongs to the thiamine-monophosphate kinase family.

The enzyme catalyses thiamine phosphate + ATP = thiamine diphosphate + ADP. It functions in the pathway cofactor biosynthesis; thiamine diphosphate biosynthesis; thiamine diphosphate from thiamine phosphate: step 1/1. In terms of biological role, catalyzes the ATP-dependent phosphorylation of thiamine-monophosphate (TMP) to form thiamine-pyrophosphate (TPP), the active form of vitamin B1. The protein is Thiamine-monophosphate kinase of Bacillus subtilis (strain 168).